The following is a 38-amino-acid chain: Cytochrome b6-f complex subunit 5 (38 aa).

Residues 5–25 traverse the membrane as a helical segment; that stretch reads LVLGLVMGLVPITLAGLFVAA.

It belongs to the PetG family. The 4 large subunits of the cytochrome b6-f complex are cytochrome b6, subunit IV (17 kDa polypeptide, PetD), cytochrome f and the Rieske protein, while the 4 small subunits are PetG, PetL, PetM and PetN. The complex functions as a dimer.

It is found in the cellular thylakoid membrane. In terms of biological role, component of the cytochrome b6-f complex, which mediates electron transfer between photosystem II (PSII) and photosystem I (PSI), cyclic electron flow around PSI, and state transitions. PetG is required for either the stability or assembly of the cytochrome b6-f complex. The protein is Cytochrome b6-f complex subunit 5 of Gloeothece citriformis (strain PCC 7424) (Cyanothece sp. (strain PCC 7424)).